The following is a 396-amino-acid chain: Elongation factor Tu (396 aa).

In terms of domain architecture, tr-type G spans 11 to 205 (KPHVNIGTIG…VIDEYIPTPV (195 aa)). Positions 20 to 27 (GHVDHGKT) are G1. 20 to 27 (GHVDHGKT) is a binding site for GTP. Threonine 27 contributes to the Mg(2+) binding site. Residues 61 to 65 (GITIN) are G2. The segment at 82 to 85 (DAPG) is G3. GTP contacts are provided by residues 82–86 (DAPGH) and 137–140 (NKTD). Positions 137-140 (NKTD) are G4. A G5 region spans residues 175–177 (SAL).

Belongs to the TRAFAC class translation factor GTPase superfamily. Classic translation factor GTPase family. EF-Tu/EF-1A subfamily. As to quaternary structure, monomer.

The protein localises to the cytoplasm. It carries out the reaction GTP + H2O = GDP + phosphate + H(+). Its function is as follows. GTP hydrolase that promotes the GTP-dependent binding of aminoacyl-tRNA to the A-site of ribosomes during protein biosynthesis. In Oenococcus oeni (strain ATCC BAA-331 / PSU-1), this protein is Elongation factor Tu.